The chain runs to 214 residues: Phosphatidylserine decarboxylase proenzyme (214 aa).

The Schiff-base intermediate with substrate; via pyruvic acid role is filled by S182. A Pyruvic acid (Ser); by autocatalysis modification is found at S182.

Belongs to the phosphatidylserine decarboxylase family. PSD-A subfamily. As to quaternary structure, heterodimer of a large membrane-associated beta subunit and a small pyruvoyl-containing alpha subunit. It depends on pyruvate as a cofactor. Post-translationally, is synthesized initially as an inactive proenzyme. Formation of the active enzyme involves a self-maturation process in which the active site pyruvoyl group is generated from an internal serine residue via an autocatalytic post-translational modification. Two non-identical subunits are generated from the proenzyme in this reaction, and the pyruvate is formed at the N-terminus of the alpha chain, which is derived from the carboxyl end of the proenzyme. The post-translation cleavage follows an unusual pathway, termed non-hydrolytic serinolysis, in which the side chain hydroxyl group of the serine supplies its oxygen atom to form the C-terminus of the beta chain, while the remainder of the serine residue undergoes an oxidative deamination to produce ammonia and the pyruvoyl prosthetic group on the alpha chain.

It is found in the cell membrane. It carries out the reaction a 1,2-diacyl-sn-glycero-3-phospho-L-serine + H(+) = a 1,2-diacyl-sn-glycero-3-phosphoethanolamine + CO2. The protein operates within phospholipid metabolism; phosphatidylethanolamine biosynthesis; phosphatidylethanolamine from CDP-diacylglycerol: step 2/2. Functionally, catalyzes the formation of phosphatidylethanolamine (PtdEtn) from phosphatidylserine (PtdSer). This Burkholderia cenocepacia (strain HI2424) protein is Phosphatidylserine decarboxylase proenzyme.